Consider the following 118-residue polypeptide: Large ribosomal subunit protein uL18 (118 aa).

The disordered stretch occupies residues 1 to 25; it reads MISKPDKNKIRQKRHRRVRGKLSGT. Residues 10–20 are compositionally biased toward basic residues; that stretch reads IRQKRHRRVRG.

It belongs to the universal ribosomal protein uL18 family. Part of the 50S ribosomal subunit; part of the 5S rRNA/L5/L18/L25 subcomplex. Contacts the 5S and 23S rRNAs.

In terms of biological role, this is one of the proteins that bind and probably mediate the attachment of the 5S RNA into the large ribosomal subunit, where it forms part of the central protuberance. In Streptococcus pyogenes serotype M5 (strain Manfredo), this protein is Large ribosomal subunit protein uL18.